The primary structure comprises 185 residues: Ribosome-recycling factor (185 aa).

The segment at 142–165 (IVKDGDAGEDEGSRAEKELDGLTK) is disordered.

This sequence belongs to the RRF family.

It is found in the cytoplasm. Its function is as follows. Responsible for the release of ribosomes from messenger RNA at the termination of protein biosynthesis. May increase the efficiency of translation by recycling ribosomes from one round of translation to another. In Renibacterium salmoninarum (strain ATCC 33209 / DSM 20767 / JCM 11484 / NBRC 15589 / NCIMB 2235), this protein is Ribosome-recycling factor.